We begin with the raw amino-acid sequence, 455 residues long: Argininosuccinate lyase (455 aa).

It belongs to the lyase 1 family. Argininosuccinate lyase subfamily.

The protein localises to the cytoplasm. The enzyme catalyses 2-(N(omega)-L-arginino)succinate = fumarate + L-arginine. The protein operates within amino-acid biosynthesis; L-arginine biosynthesis; L-arginine from L-ornithine and carbamoyl phosphate: step 3/3. This is Argininosuccinate lyase from Shewanella sp. (strain MR-7).